A 240-amino-acid polypeptide reads, in one-letter code: Ribonuclease 3 (240 aa).

Positions 13 to 143 (DHASLLEALG…LLGAVHLQHG (131 aa)) constitute an RNase III domain. Glu53 is a Mg(2+) binding site. Residue Asp57 is part of the active site. Mg(2+)-binding residues include Asp129 and Glu132. The active site involves Glu132. Residues 170–238 (DWKTSLQELT…AGAAYQALTA (69 aa)) enclose the DRBM domain.

This sequence belongs to the ribonuclease III family. As to quaternary structure, homodimer. It depends on Mg(2+) as a cofactor.

Its subcellular location is the cytoplasm. It carries out the reaction Endonucleolytic cleavage to 5'-phosphomonoester.. Functionally, digests double-stranded RNA. Involved in the processing of primary rRNA transcript to yield the immediate precursors to the large and small rRNAs (23S and 16S). Processes some mRNAs, and tRNAs when they are encoded in the rRNA operon. Processes pre-crRNA and tracrRNA of type II CRISPR loci if present in the organism. In Nocardia farcinica (strain IFM 10152), this protein is Ribonuclease 3.